Here is a 113-residue protein sequence, read N- to C-terminus: Large ribosomal subunit protein uL24 (113 aa).

The protein belongs to the universal ribosomal protein uL24 family. In terms of assembly, part of the 50S ribosomal subunit.

Functionally, one of two assembly initiator proteins, it binds directly to the 5'-end of the 23S rRNA, where it nucleates assembly of the 50S subunit. In terms of biological role, one of the proteins that surrounds the polypeptide exit tunnel on the outside of the subunit. In Chlamydia felis (strain Fe/C-56) (Chlamydophila felis), this protein is Large ribosomal subunit protein uL24.